The following is a 292-amino-acid chain: Mitochondrial ornithine transporter 1 (292 aa).

3 Solcar repeats span residues 11–97, 105–196, and 211–292; these read EGAI…CSKF, SPLG…VKKS, and SKIW…LSAL. Helical transmembrane passes span 14-34, 69-89, 104-124, 171-187, 213-233, and 267-287; these read ILDIINGSIAGACGKVIEFPF, FFQGIASPLVGACLENATLFV, VSPLGQILISGGVAGSCASLV, GQSGTFIRESFGGVAWF, IWELLISGGSAGLAFNASIFP, and GLGITLFRAVPANAAVFYIFE.

The protein belongs to the mitochondrial carrier (TC 2.A.29) family.

The protein localises to the mitochondrion inner membrane. Functionally, required for arginine biosynthesis. Transports ornithine synthesized from glutamate in the mitochondrial matrix to the cytosol, where it is converted to arginine. The protein is Mitochondrial ornithine transporter 1 (ORT1) of Saccharomyces cerevisiae (strain ATCC 204508 / S288c) (Baker's yeast).